The following is a 168-amino-acid chain: Oocyte-secreted protein 2 (168 aa).

Positions 1-21 (MGVSMALEVLVYLAVLVWTCA) are cleaved as a signal peptide.

The protein belongs to the PLAC1 family. As to expression, expressed in ovaries. Highly expressed in the germinal vesicles oocytes and metaphase II oocytes.

The protein resides in the secreted. Its subcellular location is the cytoplasm. This chain is Oocyte-secreted protein 2 (Oosp2), found in Mus musculus (Mouse).